Consider the following 280-residue polypeptide: DegV domain-containing protein CA_C1624 (280 aa).

A DegV domain is found at 4–279; it reads IALITDSTSD…PGLLGVVIFK (276 aa). Hexadecanoate-binding residues include T60 and S93.

In terms of biological role, may bind long-chain fatty acids, such as palmitate, and may play a role in lipid transport or fatty acid metabolism. The polypeptide is DegV domain-containing protein CA_C1624 (Clostridium acetobutylicum (strain ATCC 824 / DSM 792 / JCM 1419 / IAM 19013 / LMG 5710 / NBRC 13948 / NRRL B-527 / VKM B-1787 / 2291 / W)).